The primary structure comprises 501 residues: GDP-fucose protein O-fucosyltransferase 4 (501 aa).

Topologically, residues 1-10 (MLLQMAGRGK) are cytoplasmic. A helical; Signal-anchor for type II membrane protein transmembrane segment spans residues 11 to 31 (MVPCVCLGLLGVLCWVWVSFA). Residues 32 to 501 (SFPDEQLSLG…MAVRRARGKN (470 aa)) are Lumenal-facing. Asn173 is a glycosylation site (N-linked (GlcNAc...) asparagine). Residues Cys396 and Cys399 are joined by a disulfide bond. N-linked (GlcNAc...) asparagine glycosylation is found at Asn428 and Asn478.

It belongs to the glycosyltransferase 10 family.

The protein localises to the endoplasmic reticulum membrane. The catalysed reaction is L-threonyl-[protein] + GDP-beta-L-fucose = 3-O-(alpha-L-fucosyl)-L-threonyl-[protein] + GDP + H(+). The enzyme catalyses L-seryl-[protein] + GDP-beta-L-fucose = 3-O-(alpha-L-fucosyl)-L-seryl-[protein] + GDP + H(+). The protein operates within protein modification; protein glycosylation. Functionally, protein O-fucosyltransferase that specifically catalyzes O-fucosylation of serine or threonine residues in EMI domains of target proteins. Attaches fucose through an O-glycosidic linkage. O-fucosylation of EMI domain-containing proteins may be required for facilitating protein folding and secretion. This Takifugu rubripes (Japanese pufferfish) protein is GDP-fucose protein O-fucosyltransferase 4 (fut11).